The chain runs to 398 residues: Ribosomal RNA large subunit methyltransferase F (398 aa).

Basic residues predominate over residues 1–12; the sequence is MTPSRKPARPGA. Positions 1–85 are disordered; that stretch reads MTPSRKPARP…RNLHGQGYDF (85 aa). Low complexity-rich tracts occupy residues 20–40 and 48–59; these read PSAK…AQPK and QAKSQAKPQAKS.

The protein belongs to the methyltransferase superfamily. METTL16/RlmF family.

The protein localises to the cytoplasm. The enzyme catalyses adenosine(1618) in 23S rRNA + S-adenosyl-L-methionine = N(6)-methyladenosine(1618) in 23S rRNA + S-adenosyl-L-homocysteine + H(+). Its function is as follows. Specifically methylates the adenine in position 1618 of 23S rRNA. The protein is Ribosomal RNA large subunit methyltransferase F of Shewanella loihica (strain ATCC BAA-1088 / PV-4).